A 255-amino-acid chain; its full sequence is 5'-nucleotidase SurE (255 aa).

Aspartate 16, aspartate 17, serine 47, and asparagine 100 together coordinate a divalent metal cation.

The protein belongs to the SurE nucleotidase family. Requires a divalent metal cation as cofactor.

The protein resides in the cytoplasm. The catalysed reaction is a ribonucleoside 5'-phosphate + H2O = a ribonucleoside + phosphate. Functionally, nucleotidase that shows phosphatase activity on nucleoside 5'-monophosphates. The chain is 5'-nucleotidase SurE from Vibrio vulnificus (strain YJ016).